Consider the following 273-residue polypeptide: Diadenylate cyclase (273 aa).

3 helical membrane passes run 12 to 32 (LANI…IMLI), 37 to 57 (AVQL…SGFF), and 61 to 81 (TVEW…IIIF). The DAC domain occupies 82–242 (QPELRRALET…GGELFRDVSE (161 aa)).

This sequence belongs to the adenylate cyclase family. DacA/CdaA subfamily. In terms of assembly, probably a homodimer.

The protein localises to the cell membrane. It catalyses the reaction 2 ATP = 3',3'-c-di-AMP + 2 diphosphate. Catalyzes the condensation of 2 ATP molecules into cyclic di-AMP (c-di-AMP), a signaling compound secreted into the host's cytosol where it triggers the cytosolic surveillance pathway (CSP), a host pathway of innate immunity characterized by expression of beta interferon (IFN-beta) and coregulated genes. Overexpression increases export of c-di-AMP. c-di-AMP is a second messenger that mediates growth, cell wall stability and virulence. The polypeptide is Diadenylate cyclase (Listeria monocytogenes serotype 1/2a (strain 10403S)).